Consider the following 38-residue polypeptide: Large ribosomal subunit protein bL36 (38 aa).

Belongs to the bacterial ribosomal protein bL36 family.

The sequence is that of Large ribosomal subunit protein bL36 from Psychrobacter cryohalolentis (strain ATCC BAA-1226 / DSM 17306 / VKM B-2378 / K5).